The sequence spans 998 residues: DNA damage-induced apoptosis suppressor protein (998 aa).

The tract at residues 815–834 (DKQQASPSCPKNIKTPSQKI) is disordered. Polar residues predominate over residues 817–834 (QQASPSCPKNIKTPSQKI).

In terms of tissue distribution, highly expressed in colorectal and lung cancer tissues.

The protein resides in the cytoplasm. It is found in the nucleus. May be an anti-apoptotic protein involved in DNA repair or cell survival. The protein is DNA damage-induced apoptosis suppressor protein (DDIAS) of Homo sapiens (Human).